The chain runs to 382 residues: D-galactonate dehydratase (382 aa).

Residue Asp-183 participates in Mg(2+) binding. His-185 (proton donor) is an active-site residue. Mg(2+) is bound by residues Glu-209 and Glu-235. Residue His-285 is the Proton acceptor of the active site.

This sequence belongs to the mandelate racemase/muconate lactonizing enzyme family. GalD subfamily. Mg(2+) serves as cofactor.

The catalysed reaction is D-galactonate = 2-dehydro-3-deoxy-D-galactonate + H2O. It functions in the pathway carbohydrate acid metabolism; D-galactonate degradation; D-glyceraldehyde 3-phosphate and pyruvate from D-galactonate: step 1/3. In terms of biological role, catalyzes the dehydration of D-galactonate to 2-keto-3-deoxy-D-galactonate. This chain is D-galactonate dehydratase, found in Klebsiella pneumoniae subsp. pneumoniae (strain ATCC 700721 / MGH 78578).